A 187-amino-acid polypeptide reads, in one-letter code: Inner membrane-spanning protein YciB (187 aa).

Transmembrane regions (helical) follow at residues 25–45 (ATGA…ALYK), 50–70 (MQLI…FLHD), 76–96 (WKVT…HVMG), 118–138 (INWA…YVAY), and 148–168 (FKVF…GGYI).

This sequence belongs to the YciB family.

The protein localises to the cell inner membrane. Its function is as follows. Plays a role in cell envelope biogenesis, maintenance of cell envelope integrity and membrane homeostasis. The sequence is that of Inner membrane-spanning protein YciB from Vibrio vulnificus (strain CMCP6).